The primary structure comprises 387 residues: Succinate--CoA ligase [ADP-forming] subunit beta (387 aa).

In terms of domain architecture, ATP-grasp spans 9–236 (KELFAKHNVP…RDATDPLELK (228 aa)). ATP is bound by residues Lys-45, 52–54 (GRG), Ser-94, and Glu-99. The Mg(2+) site is built by Asn-191 and Asp-205. Substrate-binding positions include Asn-256 and 318-320 (GIT).

This sequence belongs to the succinate/malate CoA ligase beta subunit family. Heterotetramer of two alpha and two beta subunits. Mg(2+) is required as a cofactor.

It carries out the reaction succinate + ATP + CoA = succinyl-CoA + ADP + phosphate. The catalysed reaction is GTP + succinate + CoA = succinyl-CoA + GDP + phosphate. Its pathway is carbohydrate metabolism; tricarboxylic acid cycle; succinate from succinyl-CoA (ligase route): step 1/1. Its function is as follows. Succinyl-CoA synthetase functions in the citric acid cycle (TCA), coupling the hydrolysis of succinyl-CoA to the synthesis of either ATP or GTP and thus represents the only step of substrate-level phosphorylation in the TCA. The beta subunit provides nucleotide specificity of the enzyme and binds the substrate succinate, while the binding sites for coenzyme A and phosphate are found in the alpha subunit. The polypeptide is Succinate--CoA ligase [ADP-forming] subunit beta (Mycobacterium sp. (strain JLS)).